The sequence spans 116 residues: NADH-ubiquinone oxidoreductase chain 3 (116 aa).

3 consecutive transmembrane segments (helical) span residues 3-23, 56-76, and 85-105; these read LITTIITITITLSAVLATISF, FFLIAILFLLFDLEIALLLPL, and PALTLVWSTAVLALLTLGLIY.

The protein belongs to the complex I subunit 3 family.

It localises to the mitochondrion membrane. It catalyses the reaction a ubiquinone + NADH + 5 H(+)(in) = a ubiquinol + NAD(+) + 4 H(+)(out). Functionally, core subunit of the mitochondrial membrane respiratory chain NADH dehydrogenase (Complex I) that is believed to belong to the minimal assembly required for catalysis. Complex I functions in the transfer of electrons from NADH to the respiratory chain. The immediate electron acceptor for the enzyme is believed to be ubiquinone. This Oncorhynchus masou (Cherry salmon) protein is NADH-ubiquinone oxidoreductase chain 3 (MT-ND3).